Here is a 255-residue protein sequence, read N- to C-terminus: Hydroxyacylglutathione hydrolase (255 aa).

The Zn(2+) site is built by histidine 56, histidine 58, aspartate 60, histidine 61, histidine 114, aspartate 133, and histidine 171.

This sequence belongs to the metallo-beta-lactamase superfamily. Glyoxalase II family. Monomer. The cofactor is Zn(2+).

The enzyme catalyses an S-(2-hydroxyacyl)glutathione + H2O = a 2-hydroxy carboxylate + glutathione + H(+). It functions in the pathway secondary metabolite metabolism; methylglyoxal degradation; (R)-lactate from methylglyoxal: step 2/2. In terms of biological role, thiolesterase that catalyzes the hydrolysis of S-D-lactoyl-glutathione to form glutathione and D-lactic acid. This Rhodopseudomonas palustris (strain BisA53) protein is Hydroxyacylglutathione hydrolase.